A 173-amino-acid polypeptide reads, in one-letter code: Alpha-crystallin A chain (173 aa).

Met-1 bears the N-acetylmethionine mark. The required for complex formation with BFSP1 and BFSP2 stretch occupies residues 1 to 63; it reads MDIAIQHPWF…RTVLDSGISE (63 aa). Deamidated glutamine; partial is present on Gln-6. Phosphoserine is present on Ser-45. Gln-50 bears the Deamidated glutamine; partial mark. The 111-residue stretch at 52–162 folds into the sHSP domain; sequence LFRTVLDSGI…GHSERAIPVS (111 aa). At Lys-70 the chain carries N6-acetyllysine. Gln-90 carries the deamidated glutamine; partial modification. Lys-99 carries the N6-acetyllysine modification. A Zn(2+)-binding site is contributed by His-100. Residue Asn-101 is modified to Deamidated asparagine; partial. Zn(2+) contacts are provided by Glu-102 and His-107. Residue Ser-122 is modified to Phosphoserine. Asn-123 carries the post-translational modification Deamidated asparagine; partial. The segment at 144–173 is disordered; the sequence is PKVPSGLDAGHSERAIPVSREEKPSSAPSS. The segment covering 153–167 has biased composition (basic and acidic residues); that stretch reads GHSERAIPVSREEKP. His-154 contributes to the Zn(2+) binding site. Residue Ser-162 is glycosylated (O-linked (GlcNAc) serine).

Belongs to the small heat shock protein (HSP20) family. As to quaternary structure, heteromer composed of three CRYAA and one CRYAB subunits. Inter-subunit bridging via zinc ions enhances stability, which is crucial as there is no protein turn over in the lens. Can also form homodimers and homotetramers (dimers of dimers) which serve as the building blocks of homooligomers. Within homooligomers, the zinc-binding motif is created from residues of 3 different molecules. His-100 and Glu-102 from one molecule are ligands of the zinc ion, and His-107 and His-154 residues from additional molecules complete the site with tetrahedral coordination geometry. Part of a complex required for lens intermediate filament formation composed of BFSP1, BFSP2 and CRYAA. In terms of processing, acetylation at Lys-70 may increase chaperone activity. Undergoes age-dependent proteolytical cleavage at the C-terminus.

Its subcellular location is the cytoplasm. The protein resides in the nucleus. Functionally, contributes to the transparency and refractive index of the lens. Acts as a chaperone, preventing aggregation of various proteins under a wide range of stress conditions. Required for the correct formation of lens intermediate filaments as part of a complex composed of BFSP1, BFSP2 and CRYAA. The protein is Alpha-crystallin A chain (CRYAA) of Tapirus indicus (Asiatic tapir).